We begin with the raw amino-acid sequence, 108 residues long: MKKNTHPEYNKVLFVDSSTGYKFVCGSTYQSDKTEVYEGQEYPVCYVSVSSSSHPFFTGSKRLVDAEGRVDKFLKRYSNAKPAQPVQAPAEEGPVVKGKKKAPAKKKK.

Residues K81 to K108 are disordered. Residues K97 to K108 show a composition bias toward basic residues.

Belongs to the bacterial ribosomal protein bL31 family. Type B subfamily. Part of the 50S ribosomal subunit.

The sequence is that of Large ribosomal subunit protein bL31B from Chlamydia caviae (strain ATCC VR-813 / DSM 19441 / 03DC25 / GPIC) (Chlamydophila caviae).